A 291-amino-acid polypeptide reads, in one-letter code: Tumor necrosis factor ligand superfamily member 10 (291 aa).

Residues 1–17 lie on the Cytoplasmic side of the membrane; it reads MPSSGALKDLSFSQHFR. The helical; Signal-anchor for type II membrane protein transmembrane segment at 18-38 threads the bilayer; sequence MMVICIVLLQVLLQAVSVAVT. At 39 to 291 the chain is on the extracellular side; that stretch reads YMYFTNEMKQ…ASFFGAFLIN (253 aa). N-linked (GlcNAc...) asparagine glycosylation occurs at N52. One can recognise a THD domain in the interval 126-290; the sequence is VAAHITGITR…EASFFGAFLI (165 aa). C240 contacts Zn(2+).

Belongs to the tumor necrosis factor family. Homotrimer. One TNFSF10 homotrimer interacts with three TNFSF10A mononers. One TNFSF10 homotrimer interacts with three TNFSF10B mononers. Tyrosine phosphorylated by PKDCC/VLK. In terms of tissue distribution, widespread.

The protein localises to the cell membrane. It is found in the secreted. In terms of biological role, cytokine that binds to TNFRSF10A/TRAILR1, TNFRSF10B/TRAILR2, TNFRSF10C/TRAILR3, TNFRSF10D/TRAILR4 and possibly also to TNFRSF11B/OPG. Induces apoptosis. Its activity may be modulated by binding to the decoy receptors TNFRSF10C/TRAILR3, TNFRSF10D/TRAILR4 and TNFRSF11B/OPG that cannot induce apoptosis. The polypeptide is Tumor necrosis factor ligand superfamily member 10 (Tnfsf10) (Mus musculus (Mouse)).